The chain runs to 330 residues: Ketol-acid reductoisomerase (NADP(+)) (330 aa).

The KARI N-terminal Rossmann domain occupies 1–182 (MAVVYYDQDA…GATRAGVIET (182 aa)). NADP(+)-binding positions include 25 to 28 (YGSQ), R48, S51, S53, and 83 to 86 (DETQ). The active site involves H108. G134 contacts NADP(+). The 146-residue stretch at 183–328 (TFKEETETDL…DQLREMMSWL (146 aa)) folds into the KARI C-terminal knotted domain. D191, E195, E227, and E231 together coordinate Mg(2+). S252 lines the substrate pocket.

It belongs to the ketol-acid reductoisomerase family. Mg(2+) is required as a cofactor.

The catalysed reaction is (2R)-2,3-dihydroxy-3-methylbutanoate + NADP(+) = (2S)-2-acetolactate + NADPH + H(+). It carries out the reaction (2R,3R)-2,3-dihydroxy-3-methylpentanoate + NADP(+) = (S)-2-ethyl-2-hydroxy-3-oxobutanoate + NADPH + H(+). It functions in the pathway amino-acid biosynthesis; L-isoleucine biosynthesis; L-isoleucine from 2-oxobutanoate: step 2/4. Its pathway is amino-acid biosynthesis; L-valine biosynthesis; L-valine from pyruvate: step 2/4. Its function is as follows. Involved in the biosynthesis of branched-chain amino acids (BCAA). Catalyzes an alkyl-migration followed by a ketol-acid reduction of (S)-2-acetolactate (S2AL) to yield (R)-2,3-dihydroxy-isovalerate. In the isomerase reaction, S2AL is rearranged via a Mg-dependent methyl migration to produce 3-hydroxy-3-methyl-2-ketobutyrate (HMKB). In the reductase reaction, this 2-ketoacid undergoes a metal-dependent reduction by NADPH to yield (R)-2,3-dihydroxy-isovalerate. The sequence is that of Ketol-acid reductoisomerase (NADP(+)) from Moorella thermoacetica (strain ATCC 39073 / JCM 9320).